The sequence spans 344 residues: Isopentenyl-diphosphate delta-isomerase (344 aa).

9 to 10 lines the substrate pocket; it reads RK. FMN-binding positions include 65–67, Ser95, and Asn124; that span reads AMT. Gln154 lines the substrate pocket. Glu155 is a binding site for Mg(2+). Residues Lys185, Thr215, 259–261, and 280–281 each bind FMN; these read GVR and SG.

This sequence belongs to the IPP isomerase type 2 family. Homooctamer. Dimer of tetramers. It depends on FMN as a cofactor. Requires NADPH as cofactor. Mg(2+) serves as cofactor.

It localises to the cytoplasm. It carries out the reaction isopentenyl diphosphate = dimethylallyl diphosphate. Its function is as follows. Involved in the biosynthesis of isoprenoids. Catalyzes the 1,3-allylic rearrangement of the homoallylic substrate isopentenyl (IPP) to its allylic isomer, dimethylallyl diphosphate (DMAPP). This chain is Isopentenyl-diphosphate delta-isomerase, found in Lacticaseibacillus casei (strain BL23) (Lactobacillus casei).